The chain runs to 359 residues: GDSL esterase/lipase At2g30310 (359 aa).

Positions 1–28 are cleaved as a signal peptide; that stretch reads MSTSKTIVFGLFVATLLVSCNVAANATT. Catalysis depends on Ser41, which acts as the Nucleophile. Residues Asn103 and Asn325 are each glycosylated (N-linked (GlcNAc...) asparagine). Active-site residues include Asp333 and His336.

The protein belongs to the 'GDSL' lipolytic enzyme family.

It localises to the secreted. In Arabidopsis thaliana (Mouse-ear cress), this protein is GDSL esterase/lipase At2g30310.